We begin with the raw amino-acid sequence, 1687 residues long: Brefeldin A-inhibited guanine nucleotide-exchange protein 1 (1687 aa).

A disordered region spans residues 494–529 (SLENEAPANNHSNSNEEDGTTIDHDFHPDLNPESSD). A compositionally biased stretch (basic and acidic residues) spans 514–523 (TIDHDFHPDL). Residues 532–719 (TLEQRRAYKI…GALYDQVVIN (188 aa)) enclose the SEC7 domain. Glu-634 is an active-site residue. The segment at 1229–1248 (KGRSSSPSTPVTDDHSPSTQ) is disordered. The span at 1232–1248 (SSSPSTPVTDDHSPSTQ) shows a compositional bias: polar residues.

Homodimer.

Its subcellular location is the cytoplasm. It is found in the cytosol. The protein resides in the membrane. Inhibited by brefeldin A. Activates the ARF proteins by exchanging bound GDP for free GTP. Plays a role in vesicular protein sorting. The sequence is that of Brefeldin A-inhibited guanine nucleotide-exchange protein 1 (BIG1) from Arabidopsis thaliana (Mouse-ear cress).